Here is a 487-residue protein sequence, read N- to C-terminus: Schwannomin-interacting protein 1 (487 aa).

Disordered stretches follow at residues 1–74, 88–221, 236–260, and 308–354; these read MERS…VSAL, VIDE…PVPP, FREQ…NERE, and SGSD…SLDD. A compositionally biased stretch (basic and acidic residues) spans 14 to 27; it reads DQGKHSDSDYREDG. The segment covering 32–67 has biased composition (low complexity); that stretch reads SDAGSSSSSSRASSQSNSTKVTPCSECKSSSSPGGS. Residues 92–106 are compositionally biased toward acidic residues; the sequence is WAPEEDGEEEEEEDE. 2 stretches are compositionally biased toward basic and acidic residues: residues 107–123 and 153–162; these read RDQR…REPG and HQHDPQDLRH. Phosphoserine is present on S117. The segment covering 242–255 has biased composition (polar residues); the sequence is RNQGQARTNSTSAQ. Residues 309 to 323 show a composition bias toward basic and acidic residues; it reads GSDKDSDADDSKTET. Over residues 324–335 the composition is skewed to polar residues; it reads SLDTPLSPMSKQ. Residues 344-354 are compositionally biased toward acidic residues; it reads TTEEESESLDD. Residues 424–458 are a coiled coil; sequence IGQLQVIVNDLHSQIESLNEELVQLLLIRDELHTE.

This sequence belongs to the SCHIP1 family. As to quaternary structure, homooligomer (via coiled coil domain). Interacts with NF2; the interaction is direct. Interacts with ANK3. In terms of tissue distribution, preferentially expressed in brain, skeletal muscles and heart. Also expressed in detected in pancreas, kidney, liver, lung, and placenta.

The protein resides in the cytoplasm. The protein is Schwannomin-interacting protein 1 of Homo sapiens (Human).